The following is a 619-amino-acid chain: Auxin efflux carrier component 7 (619 aa).

The Extracellular portion of the chain corresponds to 1–7 (MITWHDL). A helical transmembrane segment spans residues 8–28 (YTVLTAVIPLYVAMILAYGSV). At 29–38 (RWWKIFSPDQ) the chain is on the cytoplasmic side. A helical transmembrane segment spans residues 39–59 (CSGINRFVAIFAVPLLSFHFI). Val-51 contacts (indol-3-yl)acetate. Over 60–71 (SSNNPYAMNLRF) the chain is Extracellular. Residues 72–92 (IAADTLQKLIMLTLLIIWANF) form a helical membrane-spanning segment. The Cytoplasmic portion of the chain corresponds to 93 to 101 (TRSGSLEWS). The chain crosses the membrane as a helical span at residues 102-122 (ITIFSLSTLPNTLVMGIPLLI). 2 residues coordinate (indol-3-yl)acetate: Asn-112 and Leu-114. Over 123–131 (AMYGEYSGS) the chain is Extracellular. A helical transmembrane segment spans residues 132-152 (LMVQIVVLQCIIWYTLLLFLF). Position 145 (Tyr-145) interacts with (indol-3-yl)acetate. The Cytoplasmic segment spans residues 153 to 479 (EYRGAKILIM…LIRNPNTYSS (327 aa)). 3 positions are modified to phosphoserine: Ser-229, Ser-246, and Ser-286. The segment at 306-340 (GAPGSYPAPNPEFSTGNKTGSKAPKENHHHVGKSN) is disordered. Thr-320 is modified (phosphothreonine). Ser-357 is modified (phosphoserine). Residues 393–413 (HTQNGENKAGPMNGDYGGEEE) form a disordered region. Residues 480–500 (LIGLIWALVAFRWDVAMPKII) form a helical membrane-spanning segment. Residues 501–503 (QQS) are Extracellular-facing. Residues 504–524 (ISILSDAGLGMAMFSLGLFMA) form a helical membrane-spanning segment. Residues 525–538 (LQPKLIACGNSTAT) lie on the Cytoplasmic side of the membrane. A helical transmembrane segment spans residues 539–559 (FAMAVRFFTGPAVMAVAAMAI). At 560–564 (GLRGD) the chain is on the extracellular side. A helical membrane pass occupies residues 565-585 (LLRVAIVQAALPQGIVPFVFA). Residues Ile-579 and Val-580 each coordinate (indol-3-yl)acetate. The Cytoplasmic segment spans residues 586–598 (KEYNVHPAILSTG). Residues 599–619 (VIFGMLIALPITLVYYILLGL) form a helical membrane-spanning segment.

Belongs to the auxin efflux carrier (TC 2.A.69.1) family. Homodimer.

The protein resides in the cell membrane. Its function is as follows. Acts as a component of the auxin efflux carrier. Mediates the initial auxin gradient which contributes to the establishment of the apical-basal axis in early embryogenesis. Together with PIN3 and PIN4, involved in the connective auxin transport (CAT) that ensures communication across the shoot system, and modulates strigolactone-mediated shoot branching control. The abcb19 pin3 pin4 pin7 quadruple mutant exhibits an additive phenotype on strigolactone-mediated bud outgrowth responses and shoot branching control. This is Auxin efflux carrier component 7 from Arabidopsis thaliana (Mouse-ear cress).